The primary structure comprises 78 residues: Acyl carrier protein (78 aa).

One can recognise a Carrier domain in the interval 2–77; that stretch reads SDTADRVQKI…DATKYIEEHK (76 aa). Position 37 is an O-(pantetheine 4'-phosphoryl)serine (Ser37).

It belongs to the acyl carrier protein (ACP) family. Post-translationally, 4'-phosphopantetheine is transferred from CoA to a specific serine of apo-ACP by AcpS. This modification is essential for activity because fatty acids are bound in thioester linkage to the sulfhydryl of the prosthetic group.

Its subcellular location is the cytoplasm. It functions in the pathway lipid metabolism; fatty acid biosynthesis. In terms of biological role, carrier of the growing fatty acid chain in fatty acid biosynthesis. The chain is Acyl carrier protein from Erythrobacter litoralis (strain HTCC2594).